The chain runs to 738 residues: 1,4-alpha-glucan branching enzyme GlgB (738 aa).

The active-site Nucleophile is D417. The Proton donor role is filled by E472.

It belongs to the glycosyl hydrolase 13 family. GlgB subfamily. As to quaternary structure, monomer.

It catalyses the reaction Transfers a segment of a (1-&gt;4)-alpha-D-glucan chain to a primary hydroxy group in a similar glucan chain.. It functions in the pathway glycan biosynthesis; glycogen biosynthesis. In terms of biological role, catalyzes the formation of the alpha-1,6-glucosidic linkages in glycogen by scission of a 1,4-alpha-linked oligosaccharide from growing alpha-1,4-glucan chains and the subsequent attachment of the oligosaccharide to the alpha-1,6 position. This Burkholderia pseudomallei (strain 1106a) protein is 1,4-alpha-glucan branching enzyme GlgB.